The sequence spans 1591 residues: Dicer-like protein 1 (1591 aa).

Composition is skewed to basic and acidic residues over residues 1–20 and 41–52; these read MEVH…RYDD and SKPRKISERKRA. The disordered stretch occupies residues 1–52; that stretch reads MEVHDGLKSPDKAAKSRYDDDRIDQDSEDEAVRLVANPDPSKPRKISERKRA. One can recognise a Helicase ATP-binding domain in the interval 115-298; the sequence is LFERAKQKNT…SYERATHELE (184 aa). Position 128–135 (128–135) interacts with ATP; it reads LDTGTGKT. The DEAH box motif lies at 242-245; it reads DEAH. Positions 439–607 constitute a Helicase C-terminal domain; the sequence is KLIEILAECF…CLSLPKDRIM (169 aa). Residues 639–729 enclose the Dicer dsRNA-binding fold domain; it reads SLVVLAEFVA…KSTLAKVLPA (91 aa). The region spanning 888–1012 is the PAZ domain; sequence TTTDRVPYNF…LVLETLLISQ (125 aa). 2 consecutive RNase III domains span residues 1050 to 1190 and 1243 to 1406; these read IDIA…LTAQ and CSQI…VDTG. Glutamate 1283, aspartate 1392, and glutamate 1395 together coordinate Mg(2+). The 75-residue stretch at 1440 to 1514 folds into the DRBM domain; sequence THITSIITTQ…AKQAVAIYED (75 aa). Positions 1452, 1485, 1526, and 1528 each coordinate Zn(2+).

It belongs to the helicase family. Dicer subfamily. The cofactor is Mg(2+). Mn(2+) is required as a cofactor.

In terms of biological role, dicer-like endonuclease which seems not to be involved in cleaving double-stranded RNA in the RNA interference (RNAi) pathway, contrary to its DCL2 counterpart. The sequence is that of Dicer-like protein 1 (DCL1) from Pyricularia oryzae (strain 70-15 / ATCC MYA-4617 / FGSC 8958) (Rice blast fungus).